The primary structure comprises 394 residues: 4-hydroxyphenylpyruvate dioxygenase (394 aa).

VOC domains lie at 18–149 and 181–339; these read SFHH…LLEY and FIDH…IFTK. Fe cation contacts are provided by His184, His267, and Glu350.

This sequence belongs to the 4HPPD family. Homodimer. Requires Fe cation as cofactor.

The protein localises to the cytoplasm. It is found in the endoplasmic reticulum membrane. Its subcellular location is the golgi apparatus membrane. It carries out the reaction 3-(4-hydroxyphenyl)pyruvate + O2 = homogentisate + CO2. Its pathway is amino-acid degradation; L-phenylalanine degradation; acetoacetate and fumarate from L-phenylalanine: step 3/6. In terms of biological role, catalyzes the conversion of 4-hydroxyphenylpyruvic acid to homogentisic acid, one of the steps in tyrosine catabolism. The polypeptide is 4-hydroxyphenylpyruvate dioxygenase (hpd) (Xenopus tropicalis (Western clawed frog)).